A 214-amino-acid polypeptide reads, in one-letter code: Large ribosomal subunit protein eL14 (214 aa).

K79 bears the N6-acetyllysine mark. Residue K85 is modified to N6-acetyllysine; alternate. At K85 the chain carries N6-succinyllysine; alternate. A Glycyl lysine isopeptide (Lys-Gly) (interchain with G-Cter in SUMO2) cross-link involves residue K124. S139 carries the post-translational modification Phosphoserine. The interval 161–214 (PAKKITTEGKKAPAQKAPAQKAAGQKAAPPPKTQKGQKAPSQKAPAPKASGKKA) is disordered. Residues 170–174 (KKAPA) form a 1-1; approximate repeat. The 4 X 5 AA tandem repeats of Q-K-A-[APS]-X stretch occupies residues 170 to 189 (KKAPAQKAPAQKAAGQKAAP). Low complexity predominate over residues 172 to 214 (APAQKAPAQKAAGQKAAPPPKTQKGQKAPSQKAPAPKASGKKA). 5 repeat units span residues 175 to 179 (QKAPA), 180 to 184 (QKAAG), 185 to 189 (QKAAP), 192 to 194 (KTQ), and 195 to 197 (KGQ). Residues 192-197 (KTQKGQ) are 2 X 3 AA tandem repeats of K-G-Q. Position 203 is an N6-succinyllysine (K203).

This sequence belongs to the eukaryotic ribosomal protein eL14 family. In terms of assembly, component of the large ribosomal subunit.

It is found in the cytoplasm. In terms of biological role, component of the large ribosomal subunit. The ribosome is a large ribonucleoprotein complex responsible for the synthesis of proteins in the cell. The polypeptide is Large ribosomal subunit protein eL14 (RPL14) (Bos taurus (Bovine)).